Consider the following 435-residue polypeptide: uncharacterized protein (435 aa).

3 WD repeats span residues 105 to 149 (DLEY…GIDS), 164 to 204 (HNNA…SKTQ), and 207 to 247 (AHDK…HSTI). Residue Ser266 is modified to Phosphoserine. A WD 4 repeat occupies 313–353 (GHKGDVNAVKWMPGSKSKLATCGDDCVVSLWDLDQPVNPSP). Residues 352–371 (SPAPTLSVSGTTPGMTGSTS) form a disordered region. Positions 358–371 (SVSGTTPGMTGSTS) are enriched in low complexity. Ser388 carries the post-translational modification Phosphoserine.

The protein resides in the cytoplasm. The protein localises to the golgi apparatus. This is an uncharacterized protein from Schizosaccharomyces pombe (strain 972 / ATCC 24843) (Fission yeast).